An 89-amino-acid chain; its full sequence is uncharacterized protein (89 aa).

To Rhizobium NGR234A y4oN.

This is an uncharacterized protein from Sinorhizobium fredii (strain NBRC 101917 / NGR234).